We begin with the raw amino-acid sequence, 520 residues long: Anthranilate synthase component 1 (520 aa).

Residues Ser40 and 291-293 each bind L-tryptophan; that span reads PYM. Residue 328–329 participates in chorismate binding; it reads GT. Residue Glu361 participates in Mg(2+) binding. Chorismate-binding positions include Tyr449, Arg469, 483-485, and Gly485; that span reads GAG. Glu498 serves as a coordination point for Mg(2+).

It belongs to the anthranilate synthase component I family. Heterotetramer consisting of two non-identical subunits: a beta subunit (TrpG) and a large alpha subunit (TrpE). Mg(2+) serves as cofactor.

The catalysed reaction is chorismate + L-glutamine = anthranilate + pyruvate + L-glutamate + H(+). It participates in amino-acid biosynthesis; L-tryptophan biosynthesis; L-tryptophan from chorismate: step 1/5. With respect to regulation, feedback inhibited by tryptophan. Its function is as follows. Part of a heterotetrameric complex that catalyzes the two-step biosynthesis of anthranilate, an intermediate in the biosynthesis of L-tryptophan. In the first step, the glutamine-binding beta subunit (TrpG) of anthranilate synthase (AS) provides the glutamine amidotransferase activity which generates ammonia as a substrate that, along with chorismate, is used in the second step, catalyzed by the large alpha subunit of AS (TrpE) to produce anthranilate. In the absence of TrpG, TrpE can synthesize anthranilate directly from chorismate and high concentrations of ammonia. The protein is Anthranilate synthase component 1 (trpE) of Buchnera aphidicola subsp. Pemphigus spyrothecae.